We begin with the raw amino-acid sequence, 358 residues long: Methionine aminopeptidase 2 (358 aa).

His111 is a binding site for substrate. A divalent metal cation-binding residues include Asp131, Asp142, and His211. Residue His219 coordinates substrate. A divalent metal cation is bound by residues Glu244 and Glu339.

The protein belongs to the peptidase M24A family. Methionine aminopeptidase eukaryotic type 2 subfamily. Co(2+) is required as a cofactor. Zn(2+) serves as cofactor. It depends on Mn(2+) as a cofactor. The cofactor is Fe(2+).

It localises to the cytoplasm. It catalyses the reaction Release of N-terminal amino acids, preferentially methionine, from peptides and arylamides.. Its function is as follows. Cotranslationally removes the N-terminal methionine from nascent proteins. The N-terminal methionine is often cleaved when the second residue in the primary sequence is small and uncharged (Met-Ala-, Cys, Gly, Pro, Ser, Thr, or Val). This chain is Methionine aminopeptidase 2, found in Laccaria bicolor (strain S238N-H82 / ATCC MYA-4686) (Bicoloured deceiver).